The chain runs to 211 residues: LexA repressor (211 aa).

Positions Val-28–Glu-48 form a DNA-binding region, H-T-H motif. Residues Ser-132 and Lys-170 each act as for autocatalytic cleavage activity in the active site.

The protein belongs to the peptidase S24 family. Homodimer.

It carries out the reaction Hydrolysis of Ala-|-Gly bond in repressor LexA.. Represses a number of genes involved in the response to DNA damage (SOS response), including recA and lexA. In the presence of single-stranded DNA, RecA interacts with LexA causing an autocatalytic cleavage which disrupts the DNA-binding part of LexA, leading to derepression of the SOS regulon and eventually DNA repair. This chain is LexA repressor, found in Leuconostoc citreum (strain KM20).